Consider the following 502-residue polypeptide: Maturase K (502 aa).

It belongs to the intron maturase 2 family. MatK subfamily.

Its subcellular location is the plastid. It is found in the chloroplast. In terms of biological role, usually encoded in the trnK tRNA gene intron. Probably assists in splicing its own and other chloroplast group II introns. This Arabis blepharophylla (Coast rock-cress) protein is Maturase K.